Consider the following 64-residue polypeptide: Prokaryotic ubiquitin-like protein Pup (64 aa).

The span at 1–11 (MAQEQTKRGGG) shows a compositional bias: basic and acidic residues. A disordered region spans residues 1 to 37 (MAQEQTKRGGGGDDEDDFASSTAAGQERREKLAEDTD). The ARC ATPase binding stretch occupies residues 21–58 (STAAGQERREKLAEDTDDLLDEIDDVLEENAEDFVRAY). Residues 24–52 (AGQERREKLAEDTDDLLDEIDDVLEENAE) are a coiled coil. Q64 is modified (deamidated glutamine). Q64 is covalently cross-linked (Isoglutamyl lysine isopeptide (Gln-Lys) (interchain with K-? in acceptor proteins)).

This sequence belongs to the prokaryotic ubiquitin-like protein family. As to quaternary structure, strongly interacts with the proteasome-associated ATPase ARC through a hydrophobic interface; the interacting region of Pup lies in its C-terminal half. There is one Pup binding site per ARC hexamer ring. Is modified by deamidation of its C-terminal glutamine to glutamate by the deamidase Dop, a prerequisite to the subsequent pupylation process.

It functions in the pathway protein degradation; proteasomal Pup-dependent pathway. Functionally, protein modifier that is covalently attached to lysine residues of substrate proteins, thereby targeting them for proteasomal degradation. The tagging system is termed pupylation. The polypeptide is Prokaryotic ubiquitin-like protein Pup (Mycolicibacterium paratuberculosis (strain ATCC BAA-968 / K-10) (Mycobacterium paratuberculosis)).